The chain runs to 146 residues: MSAALSRDATLLAFDYGEKRIGVAVGNLLTRTARALVIVRNLNREHRFKAVGELIAEWKPDALVVGLPLHPDGAPHEMTQRAMRFGNQLNGRFNLPVNWVDERYSSVEARAGLRARGDAADRVDAEAARVILQQYLDGLPDHHEFN.

This sequence belongs to the YqgF nuclease family.

It is found in the cytoplasm. Could be a nuclease involved in processing of the 5'-end of pre-16S rRNA. The chain is Putative pre-16S rRNA nuclease from Burkholderia pseudomallei (strain 668).